Here is a 419-residue protein sequence, read N- to C-terminus: MSLLAIGINHHTASVDLREKVAFGPDKLANALQQLSQHEAVNGSVILSTCNRTEVYCDVKSGARSKVIDWLSQFHQIGLEELKPSLYVYEEQAAIRHLMRVSCGLDSLVLGEPQILGQVKQAYSDSREQQAVDASLEKLFQKTFSVAKRVRTETDIGGNAVSVAYAACTLAKHIFESLEKSTVLLVGAGETIELVAKHLHANGCSKMIVANRTRERALTLAEQFDAQVISLQEIPNHLAKADIVISSTASPLPIIGKGMVETALKQRRHQPMLLVDIAVPRDVEAQVGDLNDAYLYTVDDLQSIIDSNIEQRKVEAIQAEAIVAEESAAFMSWLRSLQAVDSIREYRQSANEIREDLLSKALLSLESGSDPEKVLRELSNRLTNKLIHAPTRALQLAAEQGEPAKLTVIRQSLGLDELK.

Substrate contacts are provided by residues 49 to 52, S107, 112 to 114, and Q118; these read TCNR and EPQ. C50 acts as the Nucleophile in catalysis. 187 to 192 contributes to the NADP(+) binding site; that stretch reads GAGETI.

Belongs to the glutamyl-tRNA reductase family. In terms of assembly, homodimer.

The enzyme catalyses (S)-4-amino-5-oxopentanoate + tRNA(Glu) + NADP(+) = L-glutamyl-tRNA(Glu) + NADPH + H(+). It functions in the pathway porphyrin-containing compound metabolism; protoporphyrin-IX biosynthesis; 5-aminolevulinate from L-glutamyl-tRNA(Glu): step 1/2. Functionally, catalyzes the NADPH-dependent reduction of glutamyl-tRNA(Glu) to glutamate 1-semialdehyde (GSA). The chain is Glutamyl-tRNA reductase from Vibrio vulnificus (strain CMCP6).